A 164-amino-acid polypeptide reads, in one-letter code: Crossover junction endodeoxyribonuclease RuvC (164 aa).

Residues aspartate 7, glutamate 67, and aspartate 139 contribute to the active site. Residues aspartate 7, glutamate 67, and aspartate 139 each coordinate Mg(2+).

This sequence belongs to the RuvC family. Homodimer which binds Holliday junction (HJ) DNA. The HJ becomes 2-fold symmetrical on binding to RuvC with unstacked arms; it has a different conformation from HJ DNA in complex with RuvA. In the full resolvosome a probable DNA-RuvA(4)-RuvB(12)-RuvC(2) complex forms which resolves the HJ. The cofactor is Mg(2+).

It localises to the cytoplasm. It carries out the reaction Endonucleolytic cleavage at a junction such as a reciprocal single-stranded crossover between two homologous DNA duplexes (Holliday junction).. The RuvA-RuvB-RuvC complex processes Holliday junction (HJ) DNA during genetic recombination and DNA repair. Endonuclease that resolves HJ intermediates. Cleaves cruciform DNA by making single-stranded nicks across the HJ at symmetrical positions within the homologous arms, yielding a 5'-phosphate and a 3'-hydroxyl group; requires a central core of homology in the junction. The consensus cleavage sequence is 5'-(A/T)TT(C/G)-3'. Cleavage occurs on the 3'-side of the TT dinucleotide at the point of strand exchange. HJ branch migration catalyzed by RuvA-RuvB allows RuvC to scan DNA until it finds its consensus sequence, where it cleaves and resolves the cruciform DNA. This chain is Crossover junction endodeoxyribonuclease RuvC, found in Geobacter sulfurreducens (strain ATCC 51573 / DSM 12127 / PCA).